Consider the following 101-residue polypeptide: Protein RnfH (101 aa).

The protein belongs to the UPF0125 (RnfH) family.

In Pseudomonas aeruginosa (strain LESB58), this protein is Protein RnfH.